A 191-amino-acid polypeptide reads, in one-letter code: Protein hugin (191 aa).

A signal peptide spans 1–24; that stretch reads MCGPSYCTLLLIAASCYILVCSHA. Positions 25–119 are excised as a propeptide; the sequence is KSLQGTSKLD…LTYYLLLQKL (95 aa). Residues L137 and L181 each carry the leucine amide modification. Residues 185–191 constitute a propeptide that is removed on maturation; sequence AQVCGGD.

The protein belongs to the pyrokinin family. In terms of tissue distribution, expressed in a subgroup of neurosecretory cells in the subesophageal ganglion from embryonic stage 9 to larval stages.

It is found in the secreted. In terms of biological role, probably has a role in larval molting. The protein is Protein hugin (Hug) of Drosophila melanogaster (Fruit fly).